Consider the following 290-residue polypeptide: Festuclavine dehydrogenase easG (290 aa).

Belongs to the fgaFS/easG family.

The catalysed reaction is festuclavine + NAD(+) = 6,8-dimethyl-6,7-didehydroergoline + NADH + H(+). Its pathway is alkaloid biosynthesis; ergot alkaloid biosynthesis. Festuclavine dehydrogenase; part of the gene cluster that mediates the biosynthesis of fumiclavanine C, a fungal ergot alkaloid. DmaW catalyzes the first step of ergot alkaloid biosynthesis by condensing dimethylallyl diphosphate (DMAP) and tryptophan to form 4-dimethylallyl-L-tryptophan. The second step is catalyzed by the methyltransferase easF that methylates 4-dimethylallyl-L-tryptophan in the presence of S-adenosyl-L-methionine, resulting in the formation of 4-dimethylallyl-L-abrine. The catalase easC and the FAD-dependent oxidoreductase easE then transform 4-dimethylallyl-L-abrine to chanoclavine-I which is further oxidized by EasD in the presence of NAD(+), resulting in the formation of chanoclavine-I aldehyde. EasA reduces chanoclavine-I aldehyde to dihydrochanoclavine-I aldehyde that spontaneously dehydrates to form 6,8-dimethyl-6,7-didehydroergoline. EasG then catalyzes the reduction of 6,8-dimethyl-6,7-didehydroergoline to form festuclavine. Hydrolysis of festuclavine by easM then leads to the formation of fumigaclavine B which is in turn acetylated by easN to fumigaclavine A. Finally, easL catalyzes the conversion of fumigaclavine A into fumigaclavine C by attaching a dimethylallyl moiety to C-2 of the indole nucleus. This chain is Festuclavine dehydrogenase easG, found in Aspergillus fumigatus (strain ATCC MYA-4609 / CBS 101355 / FGSC A1100 / Af293) (Neosartorya fumigata).